A 118-amino-acid polypeptide reads, in one-letter code: Ig heavy chain V region AC38 205.12 (118 aa).

Residues 1–98 form a v segment region; that stretch reads EVQLQQSGPE…EDSAVYYCAR (98 aa). A disulfide bridge connects residues C22 and C96. A d segment region spans residues 99-104; sequence GYGYDP. A j segment region spans residues 105-118; the sequence is FDVWGTGTTVTVSS.

This chain is Ig heavy chain V region AC38 205.12, found in Mus musculus (Mouse).